The primary structure comprises 385 residues: Carbamoyl phosphate synthase small chain (385 aa).

Positions 1-185 (MSEPAILVLA…LGKGFIEQTQ (185 aa)) are CPSase. Positions 47, 237, and 239 each coordinate L-glutamine. Residues 189–376 (NVVAYDFGVK…INEMRKANLS (188 aa)) form the Glutamine amidotransferase type-1 domain. Cys265 (nucleophile) is an active-site residue. Positions 266, 269, 307, 309, and 310 each coordinate L-glutamine. Residues His349 and Glu351 contribute to the active site.

It belongs to the CarA family. As to quaternary structure, composed of two chains; the small (or glutamine) chain promotes the hydrolysis of glutamine to ammonia, which is used by the large (or ammonia) chain to synthesize carbamoyl phosphate. Tetramer of heterodimers (alpha,beta)4.

The catalysed reaction is hydrogencarbonate + L-glutamine + 2 ATP + H2O = carbamoyl phosphate + L-glutamate + 2 ADP + phosphate + 2 H(+). It catalyses the reaction L-glutamine + H2O = L-glutamate + NH4(+). The protein operates within amino-acid biosynthesis; L-arginine biosynthesis; carbamoyl phosphate from bicarbonate: step 1/1. It functions in the pathway pyrimidine metabolism; UMP biosynthesis via de novo pathway; (S)-dihydroorotate from bicarbonate: step 1/3. Functionally, small subunit of the glutamine-dependent carbamoyl phosphate synthetase (CPSase). CPSase catalyzes the formation of carbamoyl phosphate from the ammonia moiety of glutamine, carbonate, and phosphate donated by ATP, constituting the first step of 2 biosynthetic pathways, one leading to arginine and/or urea and the other to pyrimidine nucleotides. The small subunit (glutamine amidotransferase) binds and cleaves glutamine to supply the large subunit with the substrate ammonia. The protein is Carbamoyl phosphate synthase small chain of Pasteurella multocida (strain Pm70).